The primary structure comprises 788 residues: Patatin-like phospholipase domain-containing protein DEHA2B04136g (788 aa).

Residues 136–156 form a helical membrane-spanning segment; sequence WPILIFISCWISLLCFMYIIV. The PNPLA domain maps to 311–503; sequence LCLSGGACFT…RTDIPIDALN (193 aa). Residues 342-346 carry the GXSXG motif; sequence GTSGG. Serine 344 acts as the Nucleophile in catalysis. Aspartate 490 (proton acceptor) is an active-site residue. Positions 662-672 are enriched in polar residues; that stretch reads ANFNTLTSSDS. The disordered stretch occupies residues 662 to 771; sequence ANFNTLTSSD…DTGSRFLKSF (110 aa). Acidic residues-rich tracts occupy residues 690-705 and 723-749; these read MFDD…DDEV and EDGD…DEAN.

The protein belongs to the PLPL family.

It is found in the membrane. Probable lipid hydrolase. This is Patatin-like phospholipase domain-containing protein DEHA2B04136g from Debaryomyces hansenii (strain ATCC 36239 / CBS 767 / BCRC 21394 / JCM 1990 / NBRC 0083 / IGC 2968) (Yeast).